Reading from the N-terminus, the 457-residue chain is tRNA modification GTPase MnmE (457 aa).

Residues arginine 23, glutamate 85, and arginine 124 each contribute to the (6S)-5-formyl-5,6,7,8-tetrahydrofolate site. The TrmE-type G domain maps to 220-376; it reads GALVVLAGQV…LVTAIRAAVL (157 aa). Asparagine 230 contributes to the K(+) binding site. Residues 230-235, 249-255, and 274-277 each bind GTP; these read NAGKSS, TDLPGTT, and DTAG. Residue serine 234 participates in Mg(2+) binding. K(+) contacts are provided by threonine 249, leucine 251, and threonine 254. Residue threonine 255 participates in Mg(2+) binding. Lysine 457 contacts (6S)-5-formyl-5,6,7,8-tetrahydrofolate.

Belongs to the TRAFAC class TrmE-Era-EngA-EngB-Septin-like GTPase superfamily. TrmE GTPase family. In terms of assembly, homodimer. Heterotetramer of two MnmE and two MnmG subunits. It depends on K(+) as a cofactor.

It localises to the cytoplasm. Functionally, exhibits a very high intrinsic GTPase hydrolysis rate. Involved in the addition of a carboxymethylaminomethyl (cmnm) group at the wobble position (U34) of certain tRNAs, forming tRNA-cmnm(5)s(2)U34. The polypeptide is tRNA modification GTPase MnmE (Nitratidesulfovibrio vulgaris (strain ATCC 29579 / DSM 644 / CCUG 34227 / NCIMB 8303 / VKM B-1760 / Hildenborough) (Desulfovibrio vulgaris)).